We begin with the raw amino-acid sequence, 338 residues long: Clathrin light chain 1 (338 aa).

A disordered region spans residues 1-111; that stretch reads MATFDDGDFP…NEMREEGFQR (111 aa). Polar residues-rich tracts occupy residues 29–47 and 61–73; these read SEAQ…SSFN and SSPN…PFES. Basic and acidic residues predominate over residues 102–111; it reads NEMREEGFQR. The tract at residues 102–163 is involved in binding clathrin heavy chain; that stretch reads NEMREEGFQR…TIETNKTDNR (62 aa). Residues 122–142 are a coiled coil; the sequence is LEEKEKKEKEMRNQIITEAED. Residues 192–338 are disordered; sequence IPREVPNIEK…VTEAEGTKAE (147 aa). Basic and acidic residues predominate over residues 197–212; that stretch reads PNIEKKRGKKDPDKKP. Residues 241 to 253 show a composition bias toward pro residues; it reads NPPPHMMPPPPPA. The span at 254-304 shows a compositional bias: basic and acidic residues; that stretch reads KDAKDGKDAKDGKDAKTGKDGKDAKGGKDAKDLKDGKPADPKVTEEKRPSP.

It belongs to the clathrin light chain family. In terms of assembly, clathrin coats are formed from molecules containing 3 heavy chains and 3 light chains.

Its subcellular location is the cytoplasmic vesicle membrane. It localises to the membrane. The protein resides in the coated pit. Functionally, clathrin is the major protein of the polyhedral coat of coated pits and vesicles. The sequence is that of Clathrin light chain 1 from Arabidopsis thaliana (Mouse-ear cress).